A 77-amino-acid chain; its full sequence is Cold shock protein YdfK (77 aa).

This sequence to E.coli YnaE.

The sequence is that of Cold shock protein YdfK (ydfK) from Escherichia coli (strain K12).